The chain runs to 210 residues: Thymidylate kinase (210 aa).

10–17 (GPEGAGKS) serves as a coordination point for ATP.

Belongs to the thymidylate kinase family.

The enzyme catalyses dTMP + ATP = dTDP + ADP. In terms of biological role, phosphorylation of dTMP to form dTDP in both de novo and salvage pathways of dTTP synthesis. This Pseudomonas putida (strain ATCC 700007 / DSM 6899 / JCM 31910 / BCRC 17059 / LMG 24140 / F1) protein is Thymidylate kinase.